Consider the following 255-residue polypeptide: 4-hydroxy-tetrahydrodipicolinate reductase (255 aa).

Residues 8 to 13, 88 to 90, and 112 to 115 each bind NAD(+); these read GATGRV, GTT, and ATNM. His144 serves as the catalytic Proton donor/acceptor. Residue His145 participates in (S)-2,3,4,5-tetrahydrodipicolinate binding. Lys148 serves as the catalytic Proton donor. (S)-2,3,4,5-tetrahydrodipicolinate is bound at residue 154 to 155; it reads GT.

It belongs to the DapB family.

The protein localises to the cytoplasm. The catalysed reaction is (S)-2,3,4,5-tetrahydrodipicolinate + NAD(+) + H2O = (2S,4S)-4-hydroxy-2,3,4,5-tetrahydrodipicolinate + NADH + H(+). It catalyses the reaction (S)-2,3,4,5-tetrahydrodipicolinate + NADP(+) + H2O = (2S,4S)-4-hydroxy-2,3,4,5-tetrahydrodipicolinate + NADPH + H(+). It participates in amino-acid biosynthesis; L-lysine biosynthesis via DAP pathway; (S)-tetrahydrodipicolinate from L-aspartate: step 4/4. Its function is as follows. Catalyzes the conversion of 4-hydroxy-tetrahydrodipicolinate (HTPA) to tetrahydrodipicolinate. The sequence is that of 4-hydroxy-tetrahydrodipicolinate reductase from Helicobacter hepaticus (strain ATCC 51449 / 3B1).